Consider the following 521-residue polypeptide: Riboflavin transporter MCH5 (521 aa).

Disordered stretches follow at residues 1-33 (MSSDSLTPKDTIVPEEQTNQLRQPDLDEDSIHY) and 65-96 (NKGTDIESQPHWGENTSSTHDSDKEEDSNEEI). At 1–103 (MSSDSLTPKD…EEIESFPEGG (103 aa)) the chain is on the cytoplasmic side. Residues 104-124 (FKAWVVTFGCFLGLIACFGLL) traverse the membrane as a helical segment. Asn-125 carries an N-linked (GlcNAc...) asparagine glycan. Over 125-143 (NSTGVIESHLQDNQLSSES) the chain is Extracellular. The helical transmembrane segment at 144-164 (VSTIGWLFSLFLFVCSASCII) threads the bilayer. Topologically, residues 165 to 172 (SGTYFDRN) are cytoplasmic. Residues 173-193 (GFRTIMIVGTVFHVAGLFATA) form a helical membrane-spanning segment. N-linked (GlcNAc...) asparagine glycosylation occurs at Asn-194. At 194 to 200 (NSTKYWH) the chain is on the extracellular side. The chain crosses the membrane as a helical span at residues 201 to 221 (FILSFAIVCGFGNGIVLSPLV). Residues 222–233 (SVPAHYFFKRRG) lie on the Cytoplasmic side of the membrane. The chain crosses the membrane as a helical span at residues 234–254 (TALAMATIGGSVGGVVFPIML). Topologically, residues 255-269 (RSFFSMKSDTDPTYG) are extracellular. Residues 270-290 (FVWGIRTLGFLDLALLTLSII) traverse the membrane as a helical segment. Topologically, residues 291–325 (LVKERLPHVIENSKDGESRWRYILRVYILQCFDAK) are cytoplasmic. A helical transmembrane segment spans residues 326 to 346 (AFLDMKYLFCVLGTVFSELSI). The Extracellular segment spans residues 347 to 367 (NSALTYYGSYATSHGISANDA). Residues 368–388 (YTLIMIINVCGIPGRWVPGYL) traverse the membrane as a helical segment. Topologically, residues 389-396 (SDKFGRFN) are cytoplasmic. Residues 397-417 (VAIATLLTLFIVMFVGWLPFG) form a helical membrane-spanning segment. Residues 418–422 (TNLTN) are Extracellular-facing. The N-linked (GlcNAc...) asparagine glycan is linked to Asn-419. A helical transmembrane segment spans residues 423 to 443 (MYVISALYGFCSGSVFSLLPV). Over 444–461 (CCGQISKTEEFGKRYSTM) the chain is Cytoplasmic. A helical transmembrane segment spans residues 462–482 (YFVVGFGTLVGIPITGAIISI). Residues 483–487 (KTTAD) are Extracellular-facing. Residues 488-508 (YQHYIIFCGLATFVSAVCYII) traverse the membrane as a helical segment. Over 509 to 521 (SRAYCVGFKWVRF) the chain is Cytoplasmic.

It belongs to the major facilitator superfamily. Monocarboxylate porter (TC 2.A.1.13) family.

It is found in the cell membrane. In terms of biological role, riboflavin transporter involved in riboflavin (vitamin B2) uptake. Does not act in the transport of monocarboxylic acids across the plasma membrane. This Saccharomyces cerevisiae (strain ATCC 204508 / S288c) (Baker's yeast) protein is Riboflavin transporter MCH5 (MCH5).